Here is a 169-residue protein sequence, read N- to C-terminus: Cell division inhibitor SulA (169 aa).

Residues 106-112 form a ftsZ binding region; sequence ALRTGNY. The tract at residues 162–169 is lon protease binding; sequence KIHSNLYH.

Belongs to the SulA family. In terms of assembly, interacts with FtsZ. Is rapidly cleaved and degraded by the Lon protease once DNA damage is repaired.

Its function is as follows. Component of the SOS system and an inhibitor of cell division. Accumulation of SulA causes rapid cessation of cell division and the appearance of long, non-septate filaments. In the presence of GTP, binds a polymerization-competent form of FtsZ in a 1:1 ratio, thus inhibiting FtsZ polymerization and therefore preventing it from participating in the assembly of the Z ring. This mechanism prevents the premature segregation of damaged DNA to daughter cells during cell division. This Citrobacter koseri (strain ATCC BAA-895 / CDC 4225-83 / SGSC4696) protein is Cell division inhibitor SulA.